A 116-amino-acid chain; its full sequence is UPF0482 protein PC1_2049 (116 aa).

The first 31 residues, 1–31 (MNHYSFSSLIRAFIPLSLVIVSAAWQPAALA), serve as a signal peptide directing secretion.

This sequence belongs to the UPF0482 family.

The sequence is that of UPF0482 protein PC1_2049 from Pectobacterium carotovorum subsp. carotovorum (strain PC1).